Reading from the N-terminus, the 310-residue chain is tRNA pseudouridine synthase B (310 aa).

The active-site Nucleophile is the Asp49.

This sequence belongs to the pseudouridine synthase TruB family. Type 1 subfamily.

It carries out the reaction uridine(55) in tRNA = pseudouridine(55) in tRNA. Functionally, responsible for synthesis of pseudouridine from uracil-55 in the psi GC loop of transfer RNAs. This Rhizobium johnstonii (strain DSM 114642 / LMG 32736 / 3841) (Rhizobium leguminosarum bv. viciae) protein is tRNA pseudouridine synthase B.